Reading from the N-terminus, the 65-residue chain is Conotoxin tx3c (65 aa).

Positions 1–19 (MFKLGVLLTICLLLFSLNA) are cleaved as a signal peptide. A propeptide spanning residues 20–50 (VPLDGDQPADQPAERLLDDISFENNPFYDPA) is cleaved from the precursor. 3 disulfide bridges follow: cysteine 53/cysteine 64, cysteine 54/cysteine 60, and cysteine 57/cysteine 63. A 4-hydroxyproline; partial modification is found at proline 62. At cysteine 64 the chain carries Cysteine amide.

In terms of processing, the hydroxylation at Pro-62 is observed in PubMed:15924437, PubMed:19380747 and PubMed:22709442, and the non-hydroxylation is described in PubMed:22709442. Expressed by the venom duct.

It localises to the secreted. Functionally, causes scratching in mice. The chain is Conotoxin tx3c from Conus textile (Cloth-of-gold cone).